We begin with the raw amino-acid sequence, 410 residues long: uncharacterized protein (410 aa).

A run of 11 helical transmembrane segments spans residues 14–34 (IIIG…FLAI), 48–68 (GLVI…GGYI), 82–102 (IFGW…WVFF), 140–160 (YAAI…FGSS), 164–184 (TPFL…ALQF), 212–232 (YLFT…SQFS), 251–271 (LYGL…FPIV), 279–299 (PLCS…IFTV), 303–323 (VPSI…LFSM), 342–362 (GAIG…GICI), and 371–391 (IYIF…LAFA).

The protein belongs to the major facilitator superfamily. TCR/Tet family.

It localises to the cell membrane. This is an uncharacterized protein from Bacillus subtilis (strain 168).